Consider the following 111-residue polypeptide: Nucleoid-associated protein lhv_0401 (111 aa).

Belongs to the YbaB/EbfC family. Homodimer.

The protein localises to the cytoplasm. It is found in the nucleoid. Functionally, binds to DNA and alters its conformation. May be involved in regulation of gene expression, nucleoid organization and DNA protection. The polypeptide is Nucleoid-associated protein lhv_0401 (Lactobacillus helveticus (strain DPC 4571)).